Consider the following 153-residue polypeptide: Ribosomal RNA large subunit methyltransferase H (153 aa).

S-adenosyl-L-methionine is bound by residues Leu71 and Gly102.

Belongs to the RNA methyltransferase RlmH family. In terms of assembly, homodimer.

It is found in the cytoplasm. The enzyme catalyses pseudouridine(1915) in 23S rRNA + S-adenosyl-L-methionine = N(3)-methylpseudouridine(1915) in 23S rRNA + S-adenosyl-L-homocysteine + H(+). Its function is as follows. Specifically methylates the pseudouridine at position 1915 (m3Psi1915) in 23S rRNA. The protein is Ribosomal RNA large subunit methyltransferase H of Anaeromyxobacter sp. (strain K).